Consider the following 338-residue polypeptide: Heat-inducible transcription repressor HrcA (338 aa).

Belongs to the HrcA family.

Negative regulator of class I heat shock genes (grpE-dnaK-dnaJ and groELS operons). Prevents heat-shock induction of these operons. The sequence is that of Heat-inducible transcription repressor HrcA from Nitrosomonas eutropha (strain DSM 101675 / C91 / Nm57).